The primary structure comprises 325 residues: Ubiquitin thioesterase OTU1 (325 aa).

The UBX-like stretch occupies residues 7-86; it reads RIRSKTGVEN…NVSSISSNPG (80 aa). Positions 123-246 constitute an OTU domain; it reads ATRRVTDDDN…GIHYDALSIC (124 aa). Residues 128 to 134 form a cys-loop region; sequence TDDDNSC. Residue aspartate 131 is part of the active site. Residue cysteine 134 is the Nucleophile of the active site. Residues 185-195 form a variable-loop region; the sequence is IQNPKNWGGAI. The segment at 235-239 is his-loop; that stretch reads YDGIH. Position 238 (isoleucine 238) interacts with substrate. Residue histidine 239 is part of the active site. Positions 265–270 are S2 site; the sequence is KDSLAK. A C2H2-type zinc finger spans residues 292–316; sequence LICLNCNKTLKGEKEAAIHASTTGH. The active site involves histidine 316.

The protein resides in the cytoplasm. It carries out the reaction Thiol-dependent hydrolysis of ester, thioester, amide, peptide and isopeptide bonds formed by the C-terminal Gly of ubiquitin (a 76-residue protein attached to proteins as an intracellular targeting signal).. Its function is as follows. Hydrolase that can remove conjugated ubiquitin from proteins and may therefore play an important regulatory role at the level of protein turnover by preventing degradation. The chain is Ubiquitin thioesterase OTU1 (yod1) from Dictyostelium discoideum (Social amoeba).